The sequence spans 845 residues: Beta-mannosidase B (845 aa).

N-linked (GlcNAc...) asparagine glycosylation is present at Asn-252. The Proton donor role is filled by Glu-432. N-linked (GlcNAc...) asparagine glycosylation is found at Asn-717 and Asn-723.

This sequence belongs to the glycosyl hydrolase 2 family. Beta-mannosidase B subfamily.

The enzyme catalyses Hydrolysis of terminal, non-reducing beta-D-mannose residues in beta-D-mannosides.. The protein operates within glycan metabolism; N-glycan degradation. Functionally, exoglycosidase that cleaves the single beta-linked mannose residue from the non-reducing end of beta-mannosidic oligosaccharides of various complexity and length. Prefers mannobiose over mannotriose and has no activity against polymeric mannan. Is also severely restricted by galactosyl substitutions at the +1 subsite. The sequence is that of Beta-mannosidase B (mndB) from Aspergillus fumigatus (strain ATCC MYA-4609 / CBS 101355 / FGSC A1100 / Af293) (Neosartorya fumigata).